We begin with the raw amino-acid sequence, 387 residues long: MDMFWFIPTHGDSRYLGTSDGARQVSAEYVTQVAVAADTLGYEGVLIPTGRSCEDPWVIASSLINATRRLKFLVALRPGLMAPALAARTAASFDRLSGGRLLVNLVTGGDRGELEGDGVFLDHAERYEASAEFIRIWREIIAHSHSGESYDFDGKHLQVKAAKLLYPTVQRPYPPVWFGGSSDAAHDLAAEQVDTYLTWGEPPDAVAEKIASVRSKAAALGRTLTFGIRLHVIVRETEAEAWAAAESLISHLDDETVERAQSAFARMDSVGQRRMAALHSRGQRRTRADLEVSPNLWAGVGLVRGGAGTALVGDPQTVAKRIEEYAALGIDTFIFSGYPHLEEAYRFAELVFPLLPRTVKQKLPGQALSGPFGEVIANTIVPRASAR.

Belongs to the SsuD family.

It catalyses the reaction an alkanesulfonate + FMNH2 + O2 = an aldehyde + FMN + sulfite + H2O + 2 H(+). In terms of biological role, catalyzes the desulfonation of aliphatic sulfonates. The sequence is that of Alkanesulfonate monooxygenase from Xanthomonas axonopodis pv. citri (strain 306).